A 349-amino-acid chain; its full sequence is Short-wave-sensitive opsin 1 (349 aa).

Over 1–34 (MSKMSEEEEFLLFKNISLVGPWDGPQYHLAPVWA) the chain is Extracellular. Asparagine 15 carries an N-linked (GlcNAc...) asparagine glycan. A helical membrane pass occupies residues 35-59 (FHLQAVFMGFVFFVGTPLNATVLVA). Topologically, residues 60 to 71 (TLRYRKLRQPLN) are cytoplasmic. A helical membrane pass occupies residues 72–97 (YILVNVSLGGFIYCIFSVFIVFITSC). Topologically, residues 98 to 111 (YGYFVFGRHVCALE) are extracellular. Cysteine 108 and cysteine 185 are joined by a disulfide. The helical transmembrane segment at 112–131 (AFLGCTAGLVTGWSLAFLAF) threads the bilayer. The Cytoplasmic portion of the chain corresponds to 132–150 (ERYIIICKPFGNFRFSSKH). The helical transmembrane segment at 151–174 (ALMVVVATWTIGIGVSIPPFFGWS) threads the bilayer. Residues 175–200 (RFVPEGLQCSCGPDWYTVGTKYYSEY) are Extracellular-facing. A helical membrane pass occupies residues 201-228 (YTWFLFIFCYIVPLSLICFSYSQLLGAL). Residues 229–250 (RAVAAQQQESASTQKAEREVSH) are Cytoplasmic-facing. The helical transmembrane segment at 251–274 (MVVVMVGSFCLCYTPYAALAMYIV) threads the bilayer. Residues 275–282 (NNRNHGVD) lie on the Extracellular side of the membrane. Residues 283–307 (LRLVTIPAFFSKSACVYNPIIYCFM) form a helical membrane-spanning segment. Lysine 294 is subject to N6-(retinylidene)lysine. Residues 308 to 349 (NKQFRACIMEMVCGKPMTDESELSSSQKTEVSTVSSSQVGPN) are Cytoplasmic-facing. The disordered stretch occupies residues 327–349 (ESELSSSQKTEVSTVSSSQVGPN). A compositionally biased stretch (polar residues) spans 330–349 (LSSSQKTEVSTVSSSQVGPN).

Belongs to the G-protein coupled receptor 1 family. Opsin subfamily. In terms of processing, phosphorylated on some or all of the serine and threonine residues present in the C-terminal region.

The protein localises to the cell membrane. It is found in the photoreceptor inner segment. The protein resides in the cell projection. Its subcellular location is the cilium. It localises to the photoreceptor outer segment. The protein localises to the cytoplasm. It is found in the perinuclear region. Functionally, visual pigments are the light-absorbing molecules that mediate vision. They consist of an apoprotein, opsin, covalently linked to cis-retinal. Required for the maintenance of cone outer segment organization in the ventral retina, but not essential for the maintenance of functioning cone photoreceptors. Involved in ensuring correct abundance and localization of retinal membrane proteins. May increase spectral sensitivity in dim light. This is Short-wave-sensitive opsin 1 (OPN1SW) from Bos taurus (Bovine).